The following is a 614-amino-acid chain: 1-deoxy-D-xylulose-5-phosphate synthase (614 aa).

Thiamine diphosphate-binding positions include histidine 74 and 115–117 (AHS). Aspartate 146 is a binding site for Mg(2+). Residues 147-148 (GA), asparagine 175, tyrosine 282, and glutamate 363 contribute to the thiamine diphosphate site. Residue asparagine 175 coordinates Mg(2+).

Belongs to the transketolase family. DXPS subfamily. As to quaternary structure, homodimer. Mg(2+) is required as a cofactor. Requires thiamine diphosphate as cofactor.

The enzyme catalyses D-glyceraldehyde 3-phosphate + pyruvate + H(+) = 1-deoxy-D-xylulose 5-phosphate + CO2. It participates in metabolic intermediate biosynthesis; 1-deoxy-D-xylulose 5-phosphate biosynthesis; 1-deoxy-D-xylulose 5-phosphate from D-glyceraldehyde 3-phosphate and pyruvate: step 1/1. Functionally, catalyzes the acyloin condensation reaction between C atoms 2 and 3 of pyruvate and glyceraldehyde 3-phosphate to yield 1-deoxy-D-xylulose-5-phosphate (DXP). This is 1-deoxy-D-xylulose-5-phosphate synthase from Nitrosomonas eutropha (strain DSM 101675 / C91 / Nm57).